We begin with the raw amino-acid sequence, 406 residues long: Kelch domain-containing protein 2 (406 aa).

Kelch repeat units lie at residues 31 to 85 (ERSG…NTEG), 92 to 136 (SGSC…ERID), 148 to 207 (LGVW…TWSQ), 221 to 259 (HACATVGNRGFVFGGRYRDARMNDLHYLNLDTWEWNELI), 271 to 311 (HSLT…IQFN), and 322 to 359 (HTACASDEGEVIVFGGCANNLLVHHRAAHSNEILIFSV).

In terms of assembly, component of a CRL2(KLHDC2) E3 ubiquitin-protein ligase complex, also named ECS(KLHDC2) complex, composed of CUL2, Elongin BC (ELOB and ELOC), RBX1 and substrate-specific adapter KLHDC2. May form oligomers as a KLHDC2-ELOB-ELOC complex; this interaction is autoinhibitory for the E3 ligase complex as the substrate-binding site of KLHDC2 is blocked in the oligomer. Interacts with CREB3; interaction is direct and specific as it does not interact with CREB1, ATF4, ATF6, JUN, FOS, CEBPA or herpes simplex virus transactivator VP16. In terms of processing, autoubiquitinated by the CRL2(KLHDC2) E3 ligase complex. Widely expressed, with high levels in skeletal muscle, heart, pancreas and liver. Undetectable in peripheral blood leukocytes.

It is found in the nucleus. It functions in the pathway protein modification; protein ubiquitination. In terms of biological role, substrate-recognition component of a Cul2-RING (CRL2) E3 ubiquitin-protein ligase complex of the DesCEND (destruction via C-end degrons) pathway, which recognizes a C-degron located at the extreme C terminus of target proteins, leading to their ubiquitination and degradation. The C-degron recognized by the DesCEND pathway is usually a motif of less than ten residues and can be present in full-length proteins, truncated proteins or proteolytically cleaved forms. The CRL2(KLHDC2) complex specifically recognizes proteins with a diglycine (Gly-Gly) at the C-terminus, leading to their ubiquitination and degradation. The CRL2(KLHDC2) complex mediates ubiquitination and degradation of truncated SELENOK and SELENOS selenoproteins produced by failed UGA/Sec decoding, which end with a diglycine. The CRL2(KLHDC2) complex also recognizes proteolytically cleaved proteins ending with Gly-Gly, such as the N-terminal fragment of USP1, leading to their degradation. May also act as an indirect repressor of CREB3-mediated transcription by interfering with CREB3-DNA-binding. The chain is Kelch domain-containing protein 2 from Homo sapiens (Human).